Consider the following 508-residue polypeptide: Glutamate--cysteine ligase, chloroplastic (508 aa).

A chloroplast-targeting transit peptide spans 1 to 59 (MTTIFRLASSSSPSLRHDATPHNFHIRKTSISNTFSFSSKNSLSFKRILTSGGSRRFIV). 2 disulfide bridges follow: Cys172–Cys392 and Cys335–Cys350.

The protein belongs to the carboxylate-amine ligase family. Glutamate--cysteine ligase type 2 subfamily. Homodimer or monomer when oxidized or reduced, respectively. Post-translationally, the Cys-172-Cys-392 disulfide bridge is known to modulate the enzyme activity according to the redox status. The oxidized form constitutes the active enzyme.

Its subcellular location is the plastid. The protein resides in the chloroplast. It catalyses the reaction L-cysteine + L-glutamate + ATP = gamma-L-glutamyl-L-cysteine + ADP + phosphate + H(+). Its pathway is sulfur metabolism; glutathione biosynthesis; glutathione from L-cysteine and L-glutamate: step 1/2. This is Glutamate--cysteine ligase, chloroplastic (GSH1) from Medicago truncatula (Barrel medic).